Here is a 185-residue protein sequence, read N- to C-terminus: Intraflagellar transport protein 22 homolog (185 aa).

Residues 10–17, 63–67, and 123–126 contribute to the GTP site; these read GPCESGKT, DCGGD, and HKPG. Serine 137 bears the Phosphoserine mark.

This sequence belongs to the small GTPase superfamily. Rab family. In terms of assembly, component of the IFT complex B, at least composed of IFT20, IFT22, IFT25, IFT27, IFT46, IFT52, TRAF3IP1/IFT54, IFT57, IFT74, IFT80, IFT81, and IFT88. Interacts with IFT88. Interacts with CFAP61.

The protein localises to the cell projection. It localises to the cilium. Its function is as follows. Small GTPase-like component of the intraflagellar transport (IFT) complex B. This Mus musculus (Mouse) protein is Intraflagellar transport protein 22 homolog (Ift22).